Consider the following 155-residue polypeptide: Endoribonuclease YbeY (155 aa).

Zn(2+) contacts are provided by His-120, His-124, and His-130.

This sequence belongs to the endoribonuclease YbeY family. Requires Zn(2+) as cofactor.

The protein resides in the cytoplasm. In terms of biological role, single strand-specific metallo-endoribonuclease involved in late-stage 70S ribosome quality control and in maturation of the 3' terminus of the 16S rRNA. The protein is Endoribonuclease YbeY of Staphylococcus epidermidis (strain ATCC 12228 / FDA PCI 1200).